Consider the following 293-residue polypeptide: Ribosomal protein L11 methyltransferase (293 aa).

S-adenosyl-L-methionine is bound by residues threonine 145, glycine 166, aspartate 188, and asparagine 230.

Belongs to the methyltransferase superfamily. PrmA family.

Its subcellular location is the cytoplasm. The enzyme catalyses L-lysyl-[protein] + 3 S-adenosyl-L-methionine = N(6),N(6),N(6)-trimethyl-L-lysyl-[protein] + 3 S-adenosyl-L-homocysteine + 3 H(+). Methylates ribosomal protein L11. The chain is Ribosomal protein L11 methyltransferase from Escherichia coli O139:H28 (strain E24377A / ETEC).